The chain runs to 390 residues: Putative transposase YncI (390 aa).

This sequence belongs to the transposase 11 family.

The sequence is that of Putative transposase YncI (yncI) from Escherichia coli O157:H7.